Reading from the N-terminus, the 121-residue chain is Large ribosomal subunit protein bL21 (121 aa).

Belongs to the bacterial ribosomal protein bL21 family. Part of the 50S ribosomal subunit. Contacts protein L20.

In terms of biological role, this protein binds to 23S rRNA in the presence of protein L20. The sequence is that of Large ribosomal subunit protein bL21 from Gloeobacter violaceus (strain ATCC 29082 / PCC 7421).